Here is a 572-residue protein sequence, read N- to C-terminus: Methionine--tRNA ligase (572 aa).

The short motif at 11–21 (PYINGIKHLGN) is the 'HIGH' region element. Zn(2+)-binding residues include cysteine 143, cysteine 146, cysteine 156, and cysteine 159. Residues 346-350 (QFSTS) carry the 'KMSKS' region motif. Threonine 349 provides a ligand contact to ATP.

Belongs to the class-I aminoacyl-tRNA synthetase family. MetG type 1 subfamily. As to quaternary structure, monomer. The cofactor is Zn(2+).

It localises to the cytoplasm. It catalyses the reaction tRNA(Met) + L-methionine + ATP = L-methionyl-tRNA(Met) + AMP + diphosphate. In terms of biological role, is required not only for elongation of protein synthesis but also for the initiation of all mRNA translation through initiator tRNA(fMet) aminoacylation. The polypeptide is Methionine--tRNA ligase (Cereibacter sphaeroides (strain KD131 / KCTC 12085) (Rhodobacter sphaeroides)).